A 567-amino-acid chain; its full sequence is Putative laccase-17 (567 aa).

Positions 1–22 are cleaved as a signal peptide; the sequence is MPSRGCSCWLLSLALLCSLAAA. 2 consecutive Plastocyanin-like domains span residues 30 to 146 and 158 to 310; these read VIRE…PRDG and ELAP…YGAA. The N-linked (GlcNAc...) asparagine glycan is linked to asparagine 76. The Cu cation site is built by histidine 80, histidine 82, histidine 125, and histidine 127. 10 N-linked (GlcNAc...) asparagine glycosylation sites follow: asparagine 187, asparagine 241, asparagine 298, asparagine 312, asparagine 327, asparagine 365, asparagine 368, asparagine 378, asparagine 388, and asparagine 430. The Plastocyanin-like 3 domain occupies 415 to 551; the sequence is DFPANPPVQF…AMAFLVDDGV (137 aa). Histidine 468, histidine 471, histidine 473, histidine 530, cysteine 531, histidine 532, and histidine 536 together coordinate Cu cation.

It belongs to the multicopper oxidase family. Cu cation is required as a cofactor.

It is found in the secreted. Its subcellular location is the extracellular space. The protein localises to the apoplast. It carries out the reaction 4 hydroquinone + O2 = 4 benzosemiquinone + 2 H2O. Lignin degradation and detoxification of lignin-derived products. The chain is Putative laccase-17 (LAC17) from Oryza sativa subsp. japonica (Rice).